A 559-amino-acid chain; its full sequence is Formate--tetrahydrofolate ligase (559 aa).

Residue Thr-68–Thr-75 participates in ATP binding.

It belongs to the formate--tetrahydrofolate ligase family.

The enzyme catalyses (6S)-5,6,7,8-tetrahydrofolate + formate + ATP = (6R)-10-formyltetrahydrofolate + ADP + phosphate. Its pathway is one-carbon metabolism; tetrahydrofolate interconversion. In Rhizobium etli (strain ATCC 51251 / DSM 11541 / JCM 21823 / NBRC 15573 / CFN 42), this protein is Formate--tetrahydrofolate ligase.